Consider the following 472-residue polypeptide: Coenzyme F(430) synthetase (472 aa).

Residue 119–125 participates in ATP binding; the sequence is GVKAKTS.

The protein belongs to the MurCDEF family.

The catalysed reaction is 15,17(3)-seco-F430-17(3)-acid + ATP = coenzyme F430 + ADP + phosphate. Functionally, involved in the biosynthesis of the unique nickel-containing tetrapyrrole coenzyme F430, the prosthetic group of methyl-coenzyme M reductase (MCR), which plays a key role in methanogenesis and anaerobic methane oxidation. Catalyzes the activation the g-propionate side chain of 15,17(3)-seco-F430-17(3)-acid (seco-F430) for intramolecular C-C bond formation to yield the carbocyclic F ring of coenzyme F430. The chain is Coenzyme F(430) synthetase from Methanosarcina acetivorans (strain ATCC 35395 / DSM 2834 / JCM 12185 / C2A).